Here is a 374-residue protein sequence, read N- to C-terminus: Protein STRICTOSIDINE SYNTHASE-LIKE 10 (374 aa).

The first 18 residues, 1–18 (MTMMIITVFLTVIAAVLA), serve as a signal peptide directing secretion. Residue Asn50 is glycosylated (N-linked (GlcNAc...) asparagine).

This sequence belongs to the strictosidine synthase family.

It localises to the vacuole. This Arabidopsis thaliana (Mouse-ear cress) protein is Protein STRICTOSIDINE SYNTHASE-LIKE 10.